The chain runs to 257 residues: UPF0246 protein CLH_2088 (257 aa).

The protein belongs to the UPF0246 family.

The polypeptide is UPF0246 protein CLH_2088 (Clostridium botulinum (strain Alaska E43 / Type E3)).